Here is a 476-residue protein sequence, read N- to C-terminus: Bifunctional protein HldE (476 aa).

The interval 1 to 320 (MQNPHIPSFA…RAVHQEGGSG (320 aa)) is ribokinase. 196 to 199 (NLSE) lines the ATP pocket. The active site involves D265. A cytidylyltransferase region spans residues 345–476 (FTNGCFDIIH…KIVERIREKD (132 aa)).

In the N-terminal section; belongs to the carbohydrate kinase PfkB family. The protein in the C-terminal section; belongs to the cytidylyltransferase family. As to quaternary structure, homodimer.

It catalyses the reaction D-glycero-beta-D-manno-heptose 7-phosphate + ATP = D-glycero-beta-D-manno-heptose 1,7-bisphosphate + ADP + H(+). It carries out the reaction D-glycero-beta-D-manno-heptose 1-phosphate + ATP + H(+) = ADP-D-glycero-beta-D-manno-heptose + diphosphate. The protein operates within nucleotide-sugar biosynthesis; ADP-L-glycero-beta-D-manno-heptose biosynthesis; ADP-L-glycero-beta-D-manno-heptose from D-glycero-beta-D-manno-heptose 7-phosphate: step 1/4. It functions in the pathway nucleotide-sugar biosynthesis; ADP-L-glycero-beta-D-manno-heptose biosynthesis; ADP-L-glycero-beta-D-manno-heptose from D-glycero-beta-D-manno-heptose 7-phosphate: step 3/4. Its function is as follows. Catalyzes the phosphorylation of D-glycero-D-manno-heptose 7-phosphate at the C-1 position to selectively form D-glycero-beta-D-manno-heptose-1,7-bisphosphate. Catalyzes the ADP transfer from ATP to D-glycero-beta-D-manno-heptose 1-phosphate, yielding ADP-D-glycero-beta-D-manno-heptose. In Alcanivorax borkumensis (strain ATCC 700651 / DSM 11573 / NCIMB 13689 / SK2), this protein is Bifunctional protein HldE.